A 150-amino-acid chain; its full sequence is Ribosome-binding factor A (150 aa).

A disordered region spans residues Leu131 to Glu150.

This sequence belongs to the RbfA family. As to quaternary structure, monomer. Binds 30S ribosomal subunits, but not 50S ribosomal subunits or 70S ribosomes.

Its subcellular location is the cytoplasm. In terms of biological role, one of several proteins that assist in the late maturation steps of the functional core of the 30S ribosomal subunit. Associates with free 30S ribosomal subunits (but not with 30S subunits that are part of 70S ribosomes or polysomes). Required for efficient processing of 16S rRNA. May interact with the 5'-terminal helix region of 16S rRNA. This chain is Ribosome-binding factor A, found in Brucella melitensis biotype 2 (strain ATCC 23457).